We begin with the raw amino-acid sequence, 1826 residues long: Transcription initiation factor TFIID subunit 1-like (1826 aa).

3 disordered regions span residues 118–141 (DESQ…YDED), 532–555 (IPDE…SSLK), and 1252–1276 (RLKR…MKER). The segment covering 1252–1268 (RLKRNQEKEKLKGPPEK) has biased composition (basic and acidic residues). The Nuclear localization signal signature appears at 1370 to 1377 (PPKKKRRV). 2 Bromo domains span residues 1395-1503 (RRRT…LKEK) and 1517-1626 (LLDD…ITEY). The interval 1648–1826 (AELESLDPMT…SGEHKDGHGK (179 aa)) is disordered. A compositionally biased stretch (polar residues) spans 1660–1700 (PYTSQPPDMYDTNTSLSTSRDASVFQDESNLSVLDISTATP). 3 stretches are compositionally biased toward acidic residues: residues 1714–1729 (EDSD…EEED), 1740–1750 (GDGDLADEEEG), and 1768–1783 (EGED…EEGD). Over residues 1787-1797 (SAIQLSESGSD) the composition is skewed to polar residues. The segment covering 1817-1826 (SGEHKDGHGK) has biased composition (basic and acidic residues).

The protein belongs to the TAF1 family. As to quaternary structure, can bind directly to TATA-box binding protein (TBP). Interacts (via bromo domains) with acetylated lysine residues on the N-terminus of histone H1.4, H2A, H2B, H3 and H4 (in vitro). Testis specific, expressed apparently in germ cells.

It is found in the nucleus. In terms of biological role, may act as a functional substitute for TAF1/TAFII250 during male meiosis, when sex chromosomes are transcriptionally silenced. The protein is Transcription initiation factor TFIID subunit 1-like (TAF1L) of Homo sapiens (Human).